We begin with the raw amino-acid sequence, 324 residues long: DNA repair and recombination protein RadA (324 aa).

Residue 114 to 121 (GEFGSGKT) coordinates ATP.

The protein belongs to the eukaryotic RecA-like protein family.

Its function is as follows. Involved in DNA repair and in homologous recombination. Binds and assemble on single-stranded DNA to form a nucleoprotein filament. Hydrolyzes ATP in a ssDNA-dependent manner and promotes DNA strand exchange between homologous DNA molecules. The sequence is that of DNA repair and recombination protein RadA from Metallosphaera sedula (strain ATCC 51363 / DSM 5348 / JCM 9185 / NBRC 15509 / TH2).